The primary structure comprises 308 residues: Oxygen-dependent coproporphyrinogen-III oxidase (308 aa).

Ser-100 contributes to the substrate binding site. The a divalent metal cation site is built by His-104 and His-114. His-114 functions as the Proton donor in the catalytic mechanism. Residue 116-118 participates in substrate binding; sequence NFR. The a divalent metal cation site is built by His-153 and His-183. Residues 248–283 are important for dimerization; that stretch reads YVEFNLVFDRGTIFGLQSGGRTESILSSMPPMATWK. Substrate is bound at residue 266–268; it reads GGR.

This sequence belongs to the aerobic coproporphyrinogen-III oxidase family. In terms of assembly, homodimer. A divalent metal cation serves as cofactor.

It is found in the cytoplasm. It carries out the reaction coproporphyrinogen III + O2 + 2 H(+) = protoporphyrinogen IX + 2 CO2 + 2 H2O. It functions in the pathway porphyrin-containing compound metabolism; protoporphyrin-IX biosynthesis; protoporphyrinogen-IX from coproporphyrinogen-III (O2 route): step 1/1. Involved in the heme biosynthesis. Catalyzes the aerobic oxidative decarboxylation of propionate groups of rings A and B of coproporphyrinogen-III to yield the vinyl groups in protoporphyrinogen-IX. The polypeptide is Oxygen-dependent coproporphyrinogen-III oxidase (Francisella tularensis subsp. mediasiatica (strain FSC147)).